The following is a 487-amino-acid chain: Serine/threonine-protein kinase BSK7 (487 aa).

Residue glycine 2 is the site of N-myristoyl glycine attachment. The Protein kinase domain occupies 59-325; that stretch reads ENIVSEHGEK…DLETPSHQLM (267 aa). Residues 65-73 and lysine 87 contribute to the ATP site; that span reads HGEKAPNVV. The active-site Proton acceptor is the aspartate 181.

It belongs to the protein kinase superfamily. Ser/Thr protein kinase family.

It localises to the cell membrane. The catalysed reaction is L-seryl-[protein] + ATP = O-phospho-L-seryl-[protein] + ADP + H(+). It carries out the reaction L-threonyl-[protein] + ATP = O-phospho-L-threonyl-[protein] + ADP + H(+). Functionally, probable serine/threonine kinase that acts as a positive regulator of brassinosteroid (BR) signaling downstream of the receptor kinase BRI1. Functions redundantly with BSK3, BSK5, BSK6 and BSK8. The protein is Serine/threonine-protein kinase BSK7 of Arabidopsis thaliana (Mouse-ear cress).